The primary structure comprises 291 residues: Cytochrome c-552 (291 aa).

The signal sequence occupies residues 1 to 23; it reads MKKTLMASAVGAVIAFGTHGAMA. Cysteine 68, cysteine 71, histidine 72, cysteine 157, cysteine 161, and histidine 162 together coordinate heme c.

Post-translationally, binds 2 heme c groups per subunit.

Its subcellular location is the periplasm. In terms of biological role, may play a role in nitrite reduction. Shows peroxidase activity on proteolytic modification. This chain is Cytochrome c-552 (nirB), found in Stutzerimonas stutzeri (Pseudomonas stutzeri).